A 285-amino-acid chain; its full sequence is Bifunctional protein FolD (285 aa).

NADP(+)-binding positions include 165–167 (GRS) and Ser190.

Belongs to the tetrahydrofolate dehydrogenase/cyclohydrolase family. In terms of assembly, homodimer.

It carries out the reaction (6R)-5,10-methylene-5,6,7,8-tetrahydrofolate + NADP(+) = (6R)-5,10-methenyltetrahydrofolate + NADPH. It catalyses the reaction (6R)-5,10-methenyltetrahydrofolate + H2O = (6R)-10-formyltetrahydrofolate + H(+). The protein operates within one-carbon metabolism; tetrahydrofolate interconversion. Functionally, catalyzes the oxidation of 5,10-methylenetetrahydrofolate to 5,10-methenyltetrahydrofolate and then the hydrolysis of 5,10-methenyltetrahydrofolate to 10-formyltetrahydrofolate. The chain is Bifunctional protein FolD from Staphylococcus carnosus (strain TM300).